The chain runs to 314 residues: Thiosulfate dehydrogenase (314 aa).

The N-terminal stretch at Met-1 to Ala-27 is a signal peptide. 2 consecutive Cytochrome c domains span residues Pro-58–Lys-192 and Pro-185–Glu-270. Residues Cys-90, Cys-93, His-94, Cys-198, Cys-201, and His-202 each contribute to the heme c site.

In terms of assembly, monomer. Post-translationally, binds 2 heme c groups covalently per subunit.

The protein resides in the periplasm. It catalyses the reaction 2 thiosulfate + 2 Fe(III)-[cytochrome c] = tetrathionate + 2 Fe(II)-[cytochrome c] + 2 H(+). Functionally, catalyzes the oxidation of 2 molecules of thiosulfate to tetrathionate, using TsdB as an electron acceptor. In Thiomonas intermedia (strain K12) (Thiobacillus intermedius), this protein is Thiosulfate dehydrogenase (tsdA).